Consider the following 855-residue polypeptide: DNA mismatch repair protein MutS (855 aa).

616-623 (GPNMGGKS) contacts ATP.

It belongs to the DNA mismatch repair MutS family.

Its function is as follows. This protein is involved in the repair of mismatches in DNA. It is possible that it carries out the mismatch recognition step. This protein has a weak ATPase activity. This chain is DNA mismatch repair protein MutS, found in Salmonella dublin (strain CT_02021853).